A 460-amino-acid chain; its full sequence is DNA repair protein RadA (460 aa).

Residues 11–28 (CNECGADYPRWQGQCSAC) form a C4-type zinc finger. Residue 102–109 (GNPGAGKS) participates in ATP binding. A RadA KNRFG motif motif is present at residues 258 to 262 (KNRFG). Residues 357–460 (DVFVNVVGGV…SDALSVFDDL (104 aa)) form a lon-protease-like region.

The protein belongs to the RecA family. RadA subfamily.

In terms of biological role, DNA-dependent ATPase involved in processing of recombination intermediates, plays a role in repairing DNA breaks. Stimulates the branch migration of RecA-mediated strand transfer reactions, allowing the 3' invading strand to extend heteroduplex DNA faster. Binds ssDNA in the presence of ADP but not other nucleotides, has ATPase activity that is stimulated by ssDNA and various branched DNA structures, but inhibited by SSB. Does not have RecA's homology-searching function. Genetic experiments involving combination of radA mutations with mutations in recA, recB, recG, recJ, recQ, ruvA and ruvC show it plays a role in recombination and recombinational repair, probably involving stabilizing or processing branched DNA or blocked replication forks. Is genetically synergistic to RecG and RuvABC. May be involved in recovery of genetic rearrangements during replication fork breakdown. In combination with RadD is important in recovery from double-strand DNA breaks (DSB). The sequence is that of DNA repair protein RadA from Escherichia coli (strain K12).